We begin with the raw amino-acid sequence, 722 residues long: MAR-binding filament-like protein 1-1 (722 aa).

The segment at 1-20 is disordered; the sequence is MGSSCFPQSPLSHSLFSSSS. The N-terminal 50 residues, 1 to 50, are a transit peptide targeting the chloroplast; it reads MGSSCFPQSPLSHSLFSSSSLSSSQFTPLLFSPRNAQKCKKKMPAMACIH. The N-terminal 34 residues, 51–84, are a transit peptide targeting the thylakoid; sequence SENQKESEFCSRRTILFVGFSVLPLLSLRANAFE. At 85–112 the chain is on the lumenal, thylakoid side; it reads GLSVDSQVKAQPQKEETEQTIQGNAENP. Residues 113 to 133 form a helical membrane-spanning segment; that stretch reads FFSLLNGLGVFGSGVLGSLYA. Topologically, residues 134–722 are stromal; sequence LARNEKAVSD…TQPASQQESS (589 aa). The stretch at 146 to 679 forms a coiled coil; sequence IESMKNKLKE…KGEILRLRTQ (534 aa). The segment at 687-722 is disordered; sequence VNNEEKVEAGEKAAVTVKRTRRRKTATQPASQQESS. The Nuclear localization signal signature appears at 705-712; that stretch reads RTRRRKTA.

As to quaternary structure, interacts with PTST2; the interaction is essential for the initiation of starch granules biosynthesis in leaf chloroplasts, for the correct location of the process in the stromal spaces between the thylakoid membranes, and for the association of PTST2 with the thylakoid membranes. Predicted to be translocated into the thylakoid by the Tat system.

Its subcellular location is the plastid. The protein resides in the chloroplast. It localises to the chloroplast thylakoid membrane. The protein localises to the chloroplast stroma. It is found in the chloroplast nucleoid. Its subcellular location is the nucleus. The protein resides in the nucleus matrix. In terms of biological role, required for the initiation of starch granules biosynthesis in leaf chloroplasts. Anchored to the thylakoid membranes with its C-terminus facing into the stroma where it is essential for localizing PTST2 and SS4 to the stromal spaces between the thylakoid membranes in order to begin starch granule formation. Associated with leaf chloroplastic nucleoids in vivo. Binds to various chloroplastic double-stranded DNA fragments without particular sequence specificity in vitro. May function at the interface between nucleoids and thylakoids possibly by anchoring nucleoids to the thylakoid membrane system in mature chloroplasts. Likely to participate in nuclear architecture by connecting chromatin with the nuclear matrix and potentially with the nuclear envelope. The chain is MAR-binding filament-like protein 1-1 from Nicotiana tabacum (Common tobacco).